We begin with the raw amino-acid sequence, 205 residues long: NADH-quinone oxidoreductase subunit J (205 aa).

Transmembrane regions (helical) follow at residues methionine 1–leucine 21, valine 26–leucine 46, leucine 54–leucine 74, leucine 89–leucine 109, and phenylalanine 142–threonine 162.

The protein belongs to the complex I subunit 6 family.

The protein resides in the cell membrane. The enzyme catalyses a quinone + NADH + 5 H(+)(in) = a quinol + NAD(+) + 4 H(+)(out). Functionally, NDH-1 shuttles electrons from NADH, via FMN and iron-sulfur (Fe-S) centers, to quinones in the respiratory chain. Couples the redox reaction to proton translocation (for every two electrons transferred, four hydrogen ions are translocated across the cytoplasmic membrane), and thus conserves the redox energy in a proton gradient. The polypeptide is NADH-quinone oxidoreductase subunit J (nuoJ) (Rickettsia typhi (strain ATCC VR-144 / Wilmington)).